The following is a 591-amino-acid chain: Mono(ADP-ribosyl)transferase SpvB (591 aa).

In terms of domain architecture, TR mART core spans 373–576 (PMMGGNSSRP…LRLSDDATAD (204 aa)). Residues Arg-414 and 471–477 (RGLKLDK) each bind NAD(+). Residues Arg-471, Ser-501, and Glu-538 contribute to the active site. Glu-538 serves as a coordination point for NAD(+).

The protein belongs to the SpvB family.

The protein resides in the secreted. The catalysed reaction is L-arginyl-[protein] + NAD(+) = N(omega)-(ADP-D-ribosyl)-L-arginyl-[protein] + nicotinamide + H(+). Its activity is regulated as follows. Inhibited by novobiocin. Mono-ADP-ribosylates eukaryotic muscle and non-muscle actin on 'Arg-177'. ADP-ribosylates all actins tested, has more activity on nonmuscle beta/gamma-actin than on muscle alpha-actin. Prefers monomeric G-actin but can weakly ADP-ribosylate F-actin. ADP-ribosylation prevents the polymerization of G-actin to F-actin, causing actin filament depolymerization, destruction of the cytoskeleton and cytotoxicity. Does not possess NAD(+)-glycohydrolase activity, unlike most mART enzymes. The sequence is that of Mono(ADP-ribosyl)transferase SpvB (spvB) from Salmonella typhimurium.